A 138-amino-acid chain; its full sequence is MANPEQLEEQREETRLIIEELLEDGSDPDALYTIEHHLSADDLETLEKAAVEAFKLGYEVTDPEELEVEDGDIVICCDILSECALNADLIDAQVEQLMTLAEKFDVEYDGWGTYFEDPNGEDGDDEDFVDEDDDGVRH.

The tract at residues 114 to 138 (YFEDPNGEDGDDEDFVDEDDDGVRH) is disordered. Residues 118 to 138 (PNGEDGDDEDFVDEDDDGVRH) show a composition bias toward acidic residues.

Belongs to the RraB family. As to quaternary structure, interacts with the C-terminal region of Rne.

The protein resides in the cytoplasm. Its function is as follows. Globally modulates RNA abundance by binding to RNase E (Rne) and regulating its endonucleolytic activity. Can modulate Rne action in a substrate-dependent manner by altering the composition of the degradosome. The protein is Regulator of ribonuclease activity B of Escherichia coli (strain K12).